The primary structure comprises 171 residues: Peptide methionine sulfoxide reductase MsrA (171 aa).

The active site involves cysteine 13.

The protein belongs to the MsrA Met sulfoxide reductase family.

It carries out the reaction L-methionyl-[protein] + [thioredoxin]-disulfide + H2O = L-methionyl-(S)-S-oxide-[protein] + [thioredoxin]-dithiol. The catalysed reaction is [thioredoxin]-disulfide + L-methionine + H2O = L-methionine (S)-S-oxide + [thioredoxin]-dithiol. Its function is as follows. Has an important function as a repair enzyme for proteins that have been inactivated by oxidation. Catalyzes the reversible oxidation-reduction of methionine sulfoxide in proteins to methionine. The chain is Peptide methionine sulfoxide reductase MsrA from Mycobacterium ulcerans (strain Agy99).